Reading from the N-terminus, the 207-residue chain is Large ribosomal subunit protein uL4 (207 aa).

The tract at residues Arg-45 to Ile-78 is disordered. Basic residues predominate over residues Gly-60–Gly-71.

It belongs to the universal ribosomal protein uL4 family. Part of the 50S ribosomal subunit.

Its function is as follows. One of the primary rRNA binding proteins, this protein initially binds near the 5'-end of the 23S rRNA. It is important during the early stages of 50S assembly. It makes multiple contacts with different domains of the 23S rRNA in the assembled 50S subunit and ribosome. Forms part of the polypeptide exit tunnel. This chain is Large ribosomal subunit protein uL4, found in Pediococcus pentosaceus (strain ATCC 25745 / CCUG 21536 / LMG 10740 / 183-1w).